A 494-amino-acid chain; its full sequence is Cytochrome P450 2A13 (494 aa).

Asn-297 contributes to the substrate binding site. Position 439 (Cys-439) interacts with heme.

It belongs to the cytochrome P450 family. Heme is required as a cofactor. Expressed in liver and a number of extrahepatic tissues, including nasal mucosa, lung, trachea, brain, mammary gland, prostate, testis, and uterus, but not in heart, kidney, bone marrow, colon, small intestine, spleen, stomach, thymus, or skeletal muscle.

The protein resides in the endoplasmic reticulum membrane. Its subcellular location is the microsome membrane. It carries out the reaction an organic molecule + reduced [NADPH--hemoprotein reductase] + O2 = an alcohol + oxidized [NADPH--hemoprotein reductase] + H2O + H(+). Its function is as follows. Exhibits a coumarin 7-hydroxylase activity. Active in the metabolic activation of hexamethylphosphoramide, N,N-dimethylaniline, 2'-methoxyacetophenone, N-nitrosomethylphenylamine, and the tobacco-specific carcinogen, 4-(methylnitrosamino)-1-(3-pyridyl)-1-butanone. Possesses phenacetin O-deethylation activity. This is Cytochrome P450 2A13 (CYP2A13) from Homo sapiens (Human).